The chain runs to 878 residues: Vacuolar membrane protease (878 aa).

The Cytoplasmic segment spans residues 1–16 (MASLRLPRANPLAFTR). Residues 17 to 37 (WPVTVITAIVYLALLIPLLVV) traverse the membrane as a helical segment. Over 38-390 (HHVVPSAPSS…STFVLFQLHT (353 aa)) the chain is Vacuolar. Asparagine 53 and asparagine 119 each carry an N-linked (GlcNAc...) asparagine glycan. Zn(2+) is bound by residues histidine 174 and aspartate 186. Glutamate 220 functions as the Proton acceptor in the catalytic mechanism. Residues glutamate 221, glutamate 246, and histidine 319 each contribute to the Zn(2+) site. A helical membrane pass occupies residues 391-411 (LFALLVTLLIVGPLTLLFTSI). At 412-442 (ALTKADKMYLFRSSAKSEDRLDVVPLQGLRG) the chain is on the cytoplasmic side. The helical transmembrane segment at 443-463 (FFRFPFLFGIPTVVTVGLAYL) threads the bilayer. The Vacuolar segment spans residues 464–473 (VTKVNPYIIH). A helical transmembrane segment spans residues 474 to 494 (SSAYAVWSMMVAAWVFLAWFV). Residues 495-508 (SRVADFARPSAFHR) are Cytoplasmic-facing. Residues 509–529 (IYTLTWMYVLSWVSAVIATVY) traverse the membrane as a helical segment. Residues 530 to 533 (ANQR) are Vacuolar-facing. A helical membrane pass occupies residues 534–554 (GLAGGYFIFFFHAGIFLATWI). Over 555–659 (SYLELFALPS…ALPKWTWGLQ (105 aa)) the chain is Cytoplasmic. The span at 577 to 590 (GRASGHGSRRGTTS) shows a compositional bias: low complexity. A disordered region spans residues 577-611 (GRASGHGSRRGTTSGEDDGEEAEEEPTESTSLLGS). Acidic residues predominate over residues 591–603 (GEDDGEEAEEEPT). The chain crosses the membrane as a helical span at residues 660 to 680 (LLLTAPITLIMVGPLALLTIS). Over 681–693 (AISQTGQDGGHPL) the chain is Vacuolar. Residues 694–714 (FAYVAIAIFTTIMLTPLLPFI) traverse the membrane as a helical segment. Topologically, residues 715–721 (HRYTYHV) are cytoplasmic. A helical transmembrane segment spans residues 722 to 742 (PLFLLAVFLGTLIYNLVAFPF). The Vacuolar portion of the chain corresponds to 743 to 878 (SDSNRLKLYY…RRAFEIGNDD (136 aa)).

This sequence belongs to the peptidase M28 family. Zn(2+) serves as cofactor.

Its subcellular location is the vacuole membrane. Functionally, may be involved in vacuolar sorting and osmoregulation. The sequence is that of Vacuolar membrane protease from Aspergillus flavus (strain ATCC 200026 / FGSC A1120 / IAM 13836 / NRRL 3357 / JCM 12722 / SRRC 167).